Here is a 580-residue protein sequence, read N- to C-terminus: Glutamine--tRNA ligase (580 aa).

Positions 41-51 match the 'HIGH' region motif; the sequence is PEPNGYLHIGH. ATP-binding positions include 42–44 and 48–54; these read EPN and HIGHAKA. Residues Asp74 and Tyr218 each coordinate L-glutamine. ATP-binding positions include Thr237, 285–286, and 293–295; these read RL and MSK. The 'KMSKS' region signature appears at 292-296; it reads VMSKR.

It belongs to the class-I aminoacyl-tRNA synthetase family. As to quaternary structure, monomer.

It localises to the cytoplasm. It carries out the reaction tRNA(Gln) + L-glutamine + ATP = L-glutaminyl-tRNA(Gln) + AMP + diphosphate. The protein is Glutamine--tRNA ligase of Xylella fastidiosa (strain Temecula1 / ATCC 700964).